We begin with the raw amino-acid sequence, 248 residues long: tRNA1(Val) (adenine(37)-N6)-methyltransferase (248 aa).

The protein belongs to the methyltransferase superfamily. tRNA (adenine-N(6)-)-methyltransferase family.

It is found in the cytoplasm. The enzyme catalyses adenosine(37) in tRNA1(Val) + S-adenosyl-L-methionine = N(6)-methyladenosine(37) in tRNA1(Val) + S-adenosyl-L-homocysteine + H(+). In terms of biological role, specifically methylates the adenine in position 37 of tRNA(1)(Val) (anticodon cmo5UAC). This Yersinia pseudotuberculosis serotype O:1b (strain IP 31758) protein is tRNA1(Val) (adenine(37)-N6)-methyltransferase.